We begin with the raw amino-acid sequence, 352 residues long: Light dependent period A (352 aa).

4Fe-4S ferredoxin-type domains follow at residues 88–119 (RRAW…STGV) and 121–144 (RDRC…AQAW). 8 residues coordinate [4Fe-4S] cluster: Cys97, Cys101, Cys105, Cys109, Cys124, Cys127, Cys130, and Cys134.

As to quaternary structure, interacts with KaiA, CikA and SasA; the complexes do not follow circadian rhythms. It depends on [4Fe-4S] cluster as a cofactor.

In terms of biological role, functions in an input pathway to the Kai circadian clock. Probably senses the metabolic state of the cell via plastoquinone levels and informs the clock to modulate the photoperiod length. Deletion decreases the ability of the bacteria to modulate the circadian period in response to altered light regimes. Mild overexpression increases the photoperiod. Rapidly degraded in the presence of the quinone analog DBMIB (2,5-dibromo-3-methyl-6-isopropyl-p-benzoquinone), an artifical electron acceptor for photosystem II that reduces the plastoquinone pool. Partially resonsible for sensitivity of CikA to DBMIB, influences the levels of KaiA. The chain is Light dependent period A from Synechococcus elongatus (strain ATCC 33912 / PCC 7942 / FACHB-805) (Anacystis nidulans R2).